Reading from the N-terminus, the 197-residue chain is UPF0301 protein BAV3012 (197 aa).

Belongs to the UPF0301 (AlgH) family.

This Bordetella avium (strain 197N) protein is UPF0301 protein BAV3012.